Consider the following 310-residue polypeptide: Cytosolic Fe-S cluster assembly factor Nubp1 homolog (310 aa).

Positions 8, 22, 25, and 31 each coordinate [4Fe-4S] cluster. 62 to 69 (GKGGVGKS) is a binding site for ATP. Residues cysteine 239 and cysteine 242 each coordinate [4Fe-4S] cluster.

Belongs to the Mrp/NBP35 ATP-binding proteins family. NUBP1/NBP35 subfamily. As to quaternary structure, heterotetramer of 2 Nubp1 and 2 Nubp2 chains. [4Fe-4S] cluster serves as cofactor.

It localises to the cytoplasm. Functionally, component of the cytosolic iron-sulfur (Fe/S) protein assembly (CIA) machinery. Required for maturation of extramitochondrial Fe-S proteins. The Nubp1-Nubp2 heterotetramer forms a Fe-S scaffold complex, mediating the de novo assembly of an Fe-S cluster and its transfer to target apoproteins. This is Cytosolic Fe-S cluster assembly factor Nubp1 homolog from Drosophila willistoni (Fruit fly).